The sequence spans 76 residues: MEADVIKLLAAGLAMGLGAIGPGIGVGILGFGALQAIGRNPEAKGSIFTNMILLVAFAESIAIFALVISIVLIFVA.

2 helical membrane-spanning segments follow: residues 8 to 28 and 55 to 75; these read LLAA…GVGI and VAFA…LIFV.

Belongs to the ATPase C chain family. In terms of assembly, F-type ATPases have 2 components, F(1) - the catalytic core - and F(0) - the membrane proton channel. F(1) has five subunits: alpha(3), beta(3), gamma(1), delta(1), epsilon(1). F(0) has three main subunits: a(1), b(2) and c(10-14). The alpha and beta chains form an alternating ring which encloses part of the gamma chain. F(1) is attached to F(0) by a central stalk formed by the gamma and epsilon chains, while a peripheral stalk is formed by the delta and b chains.

The protein resides in the cell membrane. In terms of biological role, f(1)F(0) ATP synthase produces ATP from ADP in the presence of a proton or sodium gradient. F-type ATPases consist of two structural domains, F(1) containing the extramembraneous catalytic core and F(0) containing the membrane proton channel, linked together by a central stalk and a peripheral stalk. During catalysis, ATP synthesis in the catalytic domain of F(1) is coupled via a rotary mechanism of the central stalk subunits to proton translocation. Its function is as follows. Key component of the F(0) channel; it plays a direct role in translocation across the membrane. A homomeric c-ring of between 10-14 subunits forms the central stalk rotor element with the F(1) delta and epsilon subunits. The chain is ATP synthase subunit c from Dehalococcoides mccartyi (strain ATCC BAA-2266 / KCTC 15142 / 195) (Dehalococcoides ethenogenes (strain 195)).